We begin with the raw amino-acid sequence, 184 residues long: MKSLVAFLVVLSILRIQSQAKEVFNIFVPGNNGGNVQETVTIDNQENTATINIHSGSCSSTTIFDYKHGYIASRVLSRRACYIIKMDHKAIPALDKLQRFLYEKQTMNAMASTEYTWVKYNPLKSLITKVDWFLFGSPIEQLCKHIPLYEGEVATKPREVGTGGCAKVGILGILGISICGGIHL.

A signal peptide spans Met1–Ala20. The BRICHOS domain maps to His54–Gly151. Cys81 and Cys143 are disulfide-bonded.

As to quaternary structure, heterodimer with TFF1; disulfide linked. Interacts with TFF2.

Its subcellular location is the secreted. In Rattus norvegicus (Rat), this protein is Gastrokine-2 (Gkn2).